We begin with the raw amino-acid sequence, 494 residues long: Ammonium transporter Rh type C (494 aa).

The Cytoplasmic segment spans residues 1 to 22; the sequence is MGNFIQGCKDYFSQQKNTNIRL. Residues 23–43 form a helical membrane-spanning segment; that stretch reads TLPVVCFVWQIAMIILFGVFI. Over 44–74 the chain is Extracellular; it reads RYDEESDTHWVETKAHDNITSDIENDFYFRY. The N-linked (GlcNAc...) asparagine glycan is linked to asparagine 61. A helical transmembrane segment spans residues 75-95; that stretch reads PSFQDVHVMIFVGFGFLMTFL. Residues 96 to 99 are Cytoplasmic-facing; it reads KRYS. A helical transmembrane segment spans residues 100 to 120; sequence FGAVGFNFLIASFGLQWALLM. Residues 121–133 are Extracellular-facing; it reads QGWFHSLDPQTGK. Residues 134 to 154 traverse the membrane as a helical segment; it reads IFIGVESLINADFCVAGCLIA. At 155–166 the chain is on the cytoplasmic side; that stretch reads YGAVLGKVSPVQ. Residues 167–187 traverse the membrane as a helical segment; it reads LLVMTLFGVTLFAVEEYIILN. At 188 to 194 the chain is on the extracellular side; it reads LLHARDA. Residues 195–215 traverse the membrane as a helical segment; it reads GGSMVIHTFGGYYGLTISWVL. Over 216–234 the chain is Cytoplasmic; it reads YRPNLHQSKRMQGSVYHSD. Residues 235–255 form a helical membrane-spanning segment; that stretch reads IFAMIGTLFLWMFWPSFNSAI. The Extracellular portion of the chain corresponds to 256–265; that stretch reads TDHGDGQHRA. Residues 266 to 286 form a helical membrane-spanning segment; sequence VINTYLCLASTVLTTVAISSF. The Cytoplasmic portion of the chain corresponds to 287–297; sequence SQKTGKLDMVH. A helical membrane pass occupies residues 298–318; it reads IQNSTLAGGVALGTAAEFMIS. A topological domain (extracellular) is located at residue proline 319. A helical transmembrane segment spans residues 320-340; that stretch reads YGALIVGFLCGIISTMGYIFI. Residues 341–358 are Cytoplasmic-facing; sequence SPFLEKTLKIQDTCGIHN. A helical transmembrane segment spans residues 359 to 379; that stretch reads LHAMPGVIGGIVGAITAAAAS. The Extracellular portion of the chain corresponds to 380-411; it reads ESVYGKHALINTFDFTGDFKDRTVLTQGGYQA. Residues 412-432 form a helical membrane-spanning segment; sequence AGMCVSIVFGVAGGAIVGSIL. The Cytoplasmic segment spans residues 433–494; it reads KLPIWGDPAD…SNFSVEHCES (62 aa).

This sequence belongs to the ammonium transporter (TC 2.A.49) family. Rh subfamily. As to quaternary structure, homotrimer.

The protein localises to the apical cell membrane. In terms of biological role, functions as an ammonia transporter. May play a role in the elimination of ammonia in the gill. In Oncorhynchus mykiss (Rainbow trout), this protein is Ammonium transporter Rh type C (rhcg).